The primary structure comprises 357 residues: UDP-N-acetylglucosamine--N-acetylmuramyl-(pentapeptide) pyrophosphoryl-undecaprenol N-acetylglucosamine transferase (357 aa).

UDP-N-acetyl-alpha-D-glucosamine is bound by residues 13-15 (SAG), Arg-166, Ser-196, and Gln-291.

Belongs to the glycosyltransferase 28 family. MurG subfamily.

The protein resides in the cell membrane. The enzyme catalyses di-trans,octa-cis-undecaprenyl diphospho-N-acetyl-alpha-D-muramoyl-L-alanyl-D-glutamyl-meso-2,6-diaminopimeloyl-D-alanyl-D-alanine + UDP-N-acetyl-alpha-D-glucosamine = di-trans,octa-cis-undecaprenyl diphospho-[N-acetyl-alpha-D-glucosaminyl-(1-&gt;4)]-N-acetyl-alpha-D-muramoyl-L-alanyl-D-glutamyl-meso-2,6-diaminopimeloyl-D-alanyl-D-alanine + UDP + H(+). It functions in the pathway cell wall biogenesis; peptidoglycan biosynthesis. Functionally, cell wall formation. Catalyzes the transfer of a GlcNAc subunit on undecaprenyl-pyrophosphoryl-MurNAc-pentapeptide (lipid intermediate I) to form undecaprenyl-pyrophosphoryl-MurNAc-(pentapeptide)GlcNAc (lipid intermediate II). The chain is UDP-N-acetylglucosamine--N-acetylmuramyl-(pentapeptide) pyrophosphoryl-undecaprenol N-acetylglucosamine transferase from Clostridium perfringens (strain ATCC 13124 / DSM 756 / JCM 1290 / NCIMB 6125 / NCTC 8237 / Type A).